The sequence spans 227 residues: Cytidylate kinase (227 aa).

Position 12-20 (12-20 (GPSGAGKGT)) interacts with ATP.

It belongs to the cytidylate kinase family. Type 1 subfamily.

It localises to the cytoplasm. The catalysed reaction is CMP + ATP = CDP + ADP. It carries out the reaction dCMP + ATP = dCDP + ADP. This is Cytidylate kinase from Salmonella paratyphi B (strain ATCC BAA-1250 / SPB7).